We begin with the raw amino-acid sequence, 149 residues long: Flavodoxin YqcA (149 aa).

The Flavodoxin-like domain maps to 4-145 (IGIFVGTMYG…ESNPWVEQWG (142 aa)). FMN is bound by residues 10 to 15 (TMYGNS) and 99 to 101 (NFC).

It belongs to the flavodoxin family. MioC subfamily. In terms of assembly, monomer. It depends on FMN as a cofactor.

Functionally, probable electron transporter. This chain is Flavodoxin YqcA (yqcA), found in Escherichia coli (strain K12).